We begin with the raw amino-acid sequence, 455 residues long: Serine--tRNA ligase (455 aa).

252–254 (TAE) contributes to the L-serine binding site. ATP-binding positions include 283-285 (RKE) and valine 299. Glutamate 306 lines the L-serine pocket. 370–373 (EVVS) contacts ATP. Threonine 406 is a binding site for L-serine.

Belongs to the class-II aminoacyl-tRNA synthetase family. Type-1 seryl-tRNA synthetase subfamily. As to quaternary structure, homodimer. The tRNA molecule binds across the dimer.

Its subcellular location is the cytoplasm. It catalyses the reaction tRNA(Ser) + L-serine + ATP = L-seryl-tRNA(Ser) + AMP + diphosphate + H(+). The catalysed reaction is tRNA(Sec) + L-serine + ATP = L-seryl-tRNA(Sec) + AMP + diphosphate + H(+). Its pathway is aminoacyl-tRNA biosynthesis; selenocysteinyl-tRNA(Sec) biosynthesis; L-seryl-tRNA(Sec) from L-serine and tRNA(Sec): step 1/1. Catalyzes the attachment of serine to tRNA(Ser). Is also able to aminoacylate tRNA(Sec) with serine, to form the misacylated tRNA L-seryl-tRNA(Sec), which will be further converted into selenocysteinyl-tRNA(Sec). The protein is Serine--tRNA ligase of Thermococcus kodakarensis (strain ATCC BAA-918 / JCM 12380 / KOD1) (Pyrococcus kodakaraensis (strain KOD1)).